The primary structure comprises 354 residues: Uroporphyrinogen decarboxylase (354 aa).

Substrate contacts are provided by residues 27–31 (RQAGR), aspartate 77, tyrosine 154, serine 209, and histidine 327.

It belongs to the uroporphyrinogen decarboxylase family. Homodimer.

The protein localises to the cytoplasm. It carries out the reaction uroporphyrinogen III + 4 H(+) = coproporphyrinogen III + 4 CO2. Its pathway is porphyrin-containing compound metabolism; protoporphyrin-IX biosynthesis; coproporphyrinogen-III from 5-aminolevulinate: step 4/4. Its function is as follows. Catalyzes the decarboxylation of four acetate groups of uroporphyrinogen-III to yield coproporphyrinogen-III. This chain is Uroporphyrinogen decarboxylase, found in Shewanella loihica (strain ATCC BAA-1088 / PV-4).